Consider the following 140-residue polypeptide: Large ribosomal subunit protein uL14x/uL14z/uL14y (140 aa).

The protein belongs to the universal ribosomal protein uL14 family.

The sequence is that of Large ribosomal subunit protein uL14x/uL14z/uL14y (RPL23A) from Arabidopsis thaliana (Mouse-ear cress).